The sequence spans 129 residues: UPF0344 protein SAB0838 (129 aa).

The next 4 helical transmembrane spans lie at 1–21 (MLHL…ATYL), 36–56 (LHMV…WILI), 67–87 (MLLT…EVSI), and 99–119 (MFWI…ILPL).

The protein belongs to the UPF0344 family.

It localises to the cell membrane. This is UPF0344 protein SAB0838 from Staphylococcus aureus (strain bovine RF122 / ET3-1).